A 170-amino-acid polypeptide reads, in one-letter code: UPF0260 protein RPE_1881 (170 aa).

The protein belongs to the UPF0260 family.

This Rhodopseudomonas palustris (strain BisA53) protein is UPF0260 protein RPE_1881.